The following is a 135-amino-acid chain: Small ribosomal subunit protein uS9 (135 aa).

Residues 96–135 form a disordered region; it reads SADNRKPLKTEGHLSRDPRAKERRKYGLKKARKAPQFSKR. The segment covering 97-115 has biased composition (basic and acidic residues); it reads ADNRKPLKTEGHLSRDPRA. Residues 116 to 135 show a composition bias toward basic residues; the sequence is KERRKYGLKKARKAPQFSKR.

Belongs to the universal ribosomal protein uS9 family.

The polypeptide is Small ribosomal subunit protein uS9 (Prochlorococcus marinus (strain MIT 9313)).